Reading from the N-terminus, the 252-residue chain is 3-dehydroquinate dehydratase (252 aa).

Residues S21, 46–48 (EWR), and R82 contribute to the 3-dehydroquinate site. The active-site Proton donor/acceptor is the H143. K170 (schiff-base intermediate with substrate) is an active-site residue. The 3-dehydroquinate site is built by R213, S232, and Q236.

This sequence belongs to the type-I 3-dehydroquinase family. In terms of assembly, homodimer.

The catalysed reaction is 3-dehydroquinate = 3-dehydroshikimate + H2O. The protein operates within metabolic intermediate biosynthesis; chorismate biosynthesis; chorismate from D-erythrose 4-phosphate and phosphoenolpyruvate: step 3/7. In terms of biological role, involved in the third step of the chorismate pathway, which leads to the biosynthesis of aromatic amino acids. Catalyzes the cis-dehydration of 3-dehydroquinate (DHQ) and introduces the first double bond of the aromatic ring to yield 3-dehydroshikimate. The polypeptide is 3-dehydroquinate dehydratase (Escherichia coli O157:H7).